The sequence spans 130 residues: Prefoldin subunit alpha (130 aa).

The protein belongs to the prefoldin subunit alpha family. As to quaternary structure, heterohexamer of two alpha and four beta subunits.

The protein localises to the cytoplasm. Molecular chaperone capable of stabilizing a range of proteins. Seems to fulfill an ATP-independent, HSP70-like function in archaeal de novo protein folding. This chain is Prefoldin subunit alpha (pfdA), found in Thermoplasma acidophilum (strain ATCC 25905 / DSM 1728 / JCM 9062 / NBRC 15155 / AMRC-C165).